The following is a 217-amino-acid chain: Large ribosomal subunit protein uL4 (217 aa).

Residues 58–90 form a disordered region; it reads TAATKGRSDVSGGGKKPWRQKGTGRARSGTSRS.

This sequence belongs to the universal ribosomal protein uL4 family. As to quaternary structure, part of the 50S ribosomal subunit.

Its function is as follows. One of the primary rRNA binding proteins, this protein initially binds near the 5'-end of the 23S rRNA. It is important during the early stages of 50S assembly. It makes multiple contacts with different domains of the 23S rRNA in the assembled 50S subunit and ribosome. Functionally, forms part of the polypeptide exit tunnel. This Syntrophus aciditrophicus (strain SB) protein is Large ribosomal subunit protein uL4.